Here is a 253-residue protein sequence, read N- to C-terminus: Imidazole glycerol phosphate synthase subunit HisF (253 aa).

Catalysis depends on residues Asp11 and Asp130.

It belongs to the HisA/HisF family. In terms of assembly, heterodimer of HisH and HisF.

Its subcellular location is the cytoplasm. It carries out the reaction 5-[(5-phospho-1-deoxy-D-ribulos-1-ylimino)methylamino]-1-(5-phospho-beta-D-ribosyl)imidazole-4-carboxamide + L-glutamine = D-erythro-1-(imidazol-4-yl)glycerol 3-phosphate + 5-amino-1-(5-phospho-beta-D-ribosyl)imidazole-4-carboxamide + L-glutamate + H(+). It functions in the pathway amino-acid biosynthesis; L-histidine biosynthesis; L-histidine from 5-phospho-alpha-D-ribose 1-diphosphate: step 5/9. IGPS catalyzes the conversion of PRFAR and glutamine to IGP, AICAR and glutamate. The HisF subunit catalyzes the cyclization activity that produces IGP and AICAR from PRFAR using the ammonia provided by the HisH subunit. In Myxococcus xanthus (strain DK1622), this protein is Imidazole glycerol phosphate synthase subunit HisF.